A 212-amino-acid chain; its full sequence is Pyridoxine/pyridoxamine 5'-phosphate oxidase (212 aa).

Substrate-binding positions include 7–10 (RREY) and lysine 65. FMN contacts are provided by residues 60–65 (RIVLLK), 75–76 (FT), arginine 81, lysine 82, and glutamine 104. Substrate-binding residues include tyrosine 122, arginine 126, and serine 130. Residues 139-140 (QS) and tryptophan 184 each bind FMN. 190-192 (RLH) contacts substrate. Arginine 194 lines the FMN pocket.

This sequence belongs to the pyridoxamine 5'-phosphate oxidase family. As to quaternary structure, homodimer. The cofactor is FMN.

It carries out the reaction pyridoxamine 5'-phosphate + O2 + H2O = pyridoxal 5'-phosphate + H2O2 + NH4(+). The enzyme catalyses pyridoxine 5'-phosphate + O2 = pyridoxal 5'-phosphate + H2O2. The protein operates within cofactor metabolism; pyridoxal 5'-phosphate salvage; pyridoxal 5'-phosphate from pyridoxamine 5'-phosphate: step 1/1. It participates in cofactor metabolism; pyridoxal 5'-phosphate salvage; pyridoxal 5'-phosphate from pyridoxine 5'-phosphate: step 1/1. In terms of biological role, catalyzes the oxidation of either pyridoxine 5'-phosphate (PNP) or pyridoxamine 5'-phosphate (PMP) into pyridoxal 5'-phosphate (PLP). The chain is Pyridoxine/pyridoxamine 5'-phosphate oxidase from Pseudoalteromonas translucida (strain TAC 125).